The following is a 194-amino-acid chain: Molybdenum cofactor guanylyltransferase (194 aa).

GTP-binding positions include 12–14 (LAG), lysine 25, asparagine 53, aspartate 71, and aspartate 101. Aspartate 101 is a binding site for Mg(2+).

Belongs to the MobA family. As to quaternary structure, monomer. Requires Mg(2+) as cofactor.

It is found in the cytoplasm. It carries out the reaction Mo-molybdopterin + GTP + H(+) = Mo-molybdopterin guanine dinucleotide + diphosphate. In terms of biological role, transfers a GMP moiety from GTP to Mo-molybdopterin (Mo-MPT) cofactor (Moco or molybdenum cofactor) to form Mo-molybdopterin guanine dinucleotide (Mo-MGD) cofactor. The protein is Molybdenum cofactor guanylyltransferase of Escherichia coli O6:H1 (strain CFT073 / ATCC 700928 / UPEC).